A 169-amino-acid polypeptide reads, in one-letter code: Shikimate kinase (169 aa).

12-17 is an ATP binding site; it reads AVGKTT. A Mg(2+)-binding site is contributed by threonine 16. Substrate is bound by residues aspartate 34, arginine 58, and glycine 80. Arginine 119 provides a ligand contact to ATP. Arginine 139 lines the substrate pocket. Arginine 156 is a binding site for ATP.

This sequence belongs to the shikimate kinase family. In terms of assembly, monomer. The cofactor is Mg(2+).

It is found in the cytoplasm. The catalysed reaction is shikimate + ATP = 3-phosphoshikimate + ADP + H(+). It participates in metabolic intermediate biosynthesis; chorismate biosynthesis; chorismate from D-erythrose 4-phosphate and phosphoenolpyruvate: step 5/7. Catalyzes the specific phosphorylation of the 3-hydroxyl group of shikimic acid using ATP as a cosubstrate. This chain is Shikimate kinase, found in Alkaliphilus oremlandii (strain OhILAs) (Clostridium oremlandii (strain OhILAs)).